The primary structure comprises 460 residues: GTPase Der (460 aa).

EngA-type G domains lie at 3–167 (FTFA…PEPD) and 189–364 (IRVA…AVWN). GTP contacts are provided by residues 9-16 (GRPNVGKS), 56-60 (DTAGL), 119-122 (NKSE), 195-202 (GRPNAGKS), 242-246 (DTAGL), and 307-310 (NKWD). Positions 365-449 (TRVPTAALNR…PVRIMLREKA (85 aa)) constitute a KH-like domain.

The protein belongs to the TRAFAC class TrmE-Era-EngA-EngB-Septin-like GTPase superfamily. EngA (Der) GTPase family. As to quaternary structure, associates with the 50S ribosomal subunit.

In terms of biological role, GTPase that plays an essential role in the late steps of ribosome biogenesis. The polypeptide is GTPase Der (Rhodopseudomonas palustris (strain BisB5)).